A 456-amino-acid polypeptide reads, in one-letter code: Asparagine--tRNA ligase (456 aa).

Belongs to the class-II aminoacyl-tRNA synthetase family. In terms of assembly, homodimer.

Its subcellular location is the cytoplasm. The enzyme catalyses tRNA(Asn) + L-asparagine + ATP = L-asparaginyl-tRNA(Asn) + AMP + diphosphate + H(+). The sequence is that of Asparagine--tRNA ligase from Mycoplasma genitalium (strain ATCC 33530 / DSM 19775 / NCTC 10195 / G37) (Mycoplasmoides genitalium).